The primary structure comprises 640 residues: Serine/threonine-protein kinase ELM1 (640 aa).

Positions 27-47 (ELDSPPITPTSQTSSFGSSFS) are disordered. A compositionally biased stretch (low complexity) spans 35–47 (PTSQTSSFGSSFS). One can recognise a Protein kinase domain in the interval 88–420 (YTLGVSAGSG…PIDSRNHSQI (333 aa)). Residues 94 to 102 (AGSGQFGYV) and Lys-117 each bind ATP. Ser-152 carries the phosphoserine modification. The Proton acceptor role is filled by Asp-259. Ser-516 and Ser-519 each carry phosphoserine. The segment covering 520 to 529 (LPNLTVNNDK) has biased composition (polar residues). Disordered stretches follow at residues 520–547 (LPNL…HSSL) and 562–587 (SPKE…MDRT). Residues 530-541 (QNSDMKTDRSES) are compositionally biased toward basic and acidic residues. The segment covering 569–579 (RTHINCSQDKP) has biased composition (polar residues).

This sequence belongs to the protein kinase superfamily. Ser/Thr protein kinase family. Mg(2+) is required as a cofactor.

It carries out the reaction L-seryl-[protein] + ATP = O-phospho-L-seryl-[protein] + ADP + H(+). The enzyme catalyses L-threonyl-[protein] + ATP = O-phospho-L-threonyl-[protein] + ADP + H(+). Its function is as follows. Important role in G1 events required for bud emergence and septin organization. Coordinates cell growth and cell division at G2/M, essential for efficient cytokinesis and for regulation of SWE1. This chain is Serine/threonine-protein kinase ELM1 (ELM1), found in Saccharomyces cerevisiae (strain ATCC 204508 / S288c) (Baker's yeast).